A 239-amino-acid polypeptide reads, in one-letter code: NADH-quinone oxidoreductase chain 2 (239 aa).

Cys-96, Cys-101, Cys-137, and Cys-141 together coordinate [2Fe-2S] cluster.

This sequence belongs to the complex I 24 kDa subunit family. In terms of assembly, NDH-1 is composed of at least 14 different subunits, Nqo1 to Nqo14. The complex has a L-shaped structure, with the hydrophobic arm (subunits Nqo7, Nqo8, Nqo10 to Nqo14) embedded in the inner membrane and the hydrophilic peripheral arm (subunits Nqo1 to Nqo6, Nqo9) protruding into the bacterial cytoplasm. The hydrophilic domain contains all the redox centers. [2Fe-2S] cluster is required as a cofactor.

The protein resides in the cell inner membrane. The enzyme catalyses a quinone + NADH + 5 H(+)(in) = a quinol + NAD(+) + 4 H(+)(out). Its function is as follows. NDH-1 shuttles electrons from NADH, via FMN and iron-sulfur (Fe-S) centers, to quinones in the respiratory chain. The immediate electron acceptor for the enzyme in this species is believed to be ubiquinone. Couples the redox reaction to proton translocation (for every two electrons transferred, four hydrogen ions are translocated across the cytoplasmic membrane), and thus conserves the redox energy in a proton gradient. In Paracoccus denitrificans, this protein is NADH-quinone oxidoreductase chain 2 (nqo2).